A 267-amino-acid polypeptide reads, in one-letter code: Putative carboxymethylenebutenolidase (267 aa).

Residues cysteine 137, aspartate 194, and histidine 226 contribute to the active site.

Belongs to the dienelactone hydrolase family.

It carries out the reaction 2-(5-oxo-2,5-dihydrofuran-2-ylidene)acetate + H2O = 4-oxohex-2-enedioate + H(+). The chain is Putative carboxymethylenebutenolidase from Yersinia pestis.